The following is a 272-amino-acid chain: Short-chain dehydrogenase/reductase iacC (272 aa).

NADP(+) is bound by residues I13, D59, and N88. Catalysis depends on proton donor residues S150 and Y169. NADP(+)-binding residues include Y169, K173, and V202. K173 serves as the catalytic Lowers pKa of active site Tyr.

This sequence belongs to the short-chain dehydrogenases/reductases (SDR) family.

It participates in secondary metabolite biosynthesis. Functionally, short-chain dehydrogenase/reductase; part of the gene cluster that mediates the biosynthesis of iso-A82775C, a enylepoxycyclohexane and biosynthetic precursor of the chloropestolide anticancer natural products. Within the cluster, the prenyltransferase iacE prenylates siccayne to generate pestalodiol E, using dimethylallyl diphosphate (DMAPP) as cosubstrate. The probable oxidoreductase iacF is then involved in the epoxidation of pestalodiol F to pestalodiol F, which is further converted to pestalofone A by the short-chain dehydrogenase/reductase iacG. Iso-A82775C is subsequently generated from pestalofone A by the short-chain dehydrogenase/reductase iacC. Iso-A82775C is further condensed with maldoxin via a Diels-Alder reaction to produce the anticancer natural products chloropestolides A to E. In Pestalotiopsis fici (strain W106-1 / CGMCC3.15140), this protein is Short-chain dehydrogenase/reductase iacC.